The following is a 314-amino-acid chain: Aspartate carbamoyltransferase catalytic subunit (314 aa).

Carbamoyl phosphate contacts are provided by R58 and T59. K86 provides a ligand contact to L-aspartate. Carbamoyl phosphate is bound by residues R108, H136, and Q139. L-aspartate contacts are provided by R169 and R223. Residues G264 and P265 each contribute to the carbamoyl phosphate site.

This sequence belongs to the aspartate/ornithine carbamoyltransferase superfamily. ATCase family. Heterododecamer (2C3:3R2) of six catalytic PyrB chains organized as two trimers (C3), and six regulatory PyrI chains organized as three dimers (R2).

It carries out the reaction carbamoyl phosphate + L-aspartate = N-carbamoyl-L-aspartate + phosphate + H(+). It functions in the pathway pyrimidine metabolism; UMP biosynthesis via de novo pathway; (S)-dihydroorotate from bicarbonate: step 2/3. Functionally, catalyzes the condensation of carbamoyl phosphate and aspartate to form carbamoyl aspartate and inorganic phosphate, the committed step in the de novo pyrimidine nucleotide biosynthesis pathway. In Jannaschia sp. (strain CCS1), this protein is Aspartate carbamoyltransferase catalytic subunit.